The primary structure comprises 166 residues: MRLILLSGLLLLGTFLVNGHDADPEGEVLNSVLLTLMKLQKEFTNLFHAFLTVHKARSFGSGSERLYVSNKEIKNFEALKVICKQAGGQIPSPQLENQNKAFANVLERHNKEAFLVVGDSGNFTNWAAGQPNKADGTCVKADKQGFWHSTSCDDNLLVVCEFYFIL.

The first 19 residues, 1–19 (MRLILLSGLLLLGTFLVNG), serve as a signal peptide directing secretion. In terms of domain architecture, C-type lectin spans 46 to 161 (LFHAFLTVHK…CDDNLLVVCE (116 aa)). Intrachain disulfides connect Cys83–Cys160 and Cys138–Cys152. The N-linked (GlcNAc...) asparagine glycan is linked to Asn122.

The protein belongs to the alpha-type phospholipase A2 inhibitor family. As to quaternary structure, homotrimer; non-covalently linked. As to expression, expressed by the liver.

It localises to the secreted. This phospholipase A2 inhibitor binds directly phospholipase A2 in the presence or absence of calcium. In Crotalus durissus terrificus (South American rattlesnake), this protein is Phospholipase A2 inhibitor A4/A5.